The following is a 501-amino-acid chain: Glutamyl-tRNA(Gln) amidotransferase subunit A (501 aa).

Active-site charge relay system residues include lysine 80 and serine 155. The Acyl-ester intermediate role is filled by serine 179.

The protein belongs to the amidase family. GatA subfamily. Heterotrimer of A, B and C subunits.

It carries out the reaction L-glutamyl-tRNA(Gln) + L-glutamine + ATP + H2O = L-glutaminyl-tRNA(Gln) + L-glutamate + ADP + phosphate + H(+). In terms of biological role, allows the formation of correctly charged Gln-tRNA(Gln) through the transamidation of misacylated Glu-tRNA(Gln) in organisms which lack glutaminyl-tRNA synthetase. The reaction takes place in the presence of glutamine and ATP through an activated gamma-phospho-Glu-tRNA(Gln). The sequence is that of Glutamyl-tRNA(Gln) amidotransferase subunit A from Cupriavidus taiwanensis (strain DSM 17343 / BCRC 17206 / CCUG 44338 / CIP 107171 / LMG 19424 / R1) (Ralstonia taiwanensis (strain LMG 19424)).